The sequence spans 70 residues: Large ribosomal subunit protein uL29 (70 aa).

It belongs to the universal ribosomal protein uL29 family.

This Methanocaldococcus jannaschii (strain ATCC 43067 / DSM 2661 / JAL-1 / JCM 10045 / NBRC 100440) (Methanococcus jannaschii) protein is Large ribosomal subunit protein uL29 (rpl29).